A 330-amino-acid chain; its full sequence is uncharacterized protein (330 aa).

The chain crosses the membrane as a helical span at residues 2-22 (IKPIYLIIIGTVICLVILYYF). N72, N94, N234, and N315 each carry an N-linked (GlcNAc...) asparagine; by host glycan.

The protein resides in the membrane. This is an uncharacterized protein from Acanthamoeba polyphaga mimivirus (APMV).